A 349-amino-acid chain; its full sequence is MLEGIEREAAEHSNGCSGPAGHAPPAGAPRHDWTVQQAVALHDLPLFELIDRARAVHRAFHGEHEVQLCTLLSVKTGGCPEDCAYCPQSSHYETEVGPERMLDVGAVLAAAERAREGGSTRFCMGAAWREVKDGPAFERVLDMVRGVKALGLEACCTLGMLTDDQARRLKEAGLDAYNHNLDTSRKAYKSIISTRTYDERLVTLRNVRRAGITVCSGGIIGMGESIADRCEMLVELARLDPHPESVPINALVRSPGTPLESLPPVDPIEFVRMIAVARVMMPRAMVRLSAGRTELSRETQLLCMYAGANSIFYGDRLLTTPNPGQDEDRALIEKAGLQPMAPAAARAAR.

The span at 1-11 (MLEGIEREAAE) shows a compositional bias: basic and acidic residues. The tract at residues 1–30 (MLEGIEREAAEHSNGCSGPAGHAPPAGAPR) is disordered. The Radical SAM core domain occupies 64–283 (HEVQLCTLLS…IAVARVMMPR (220 aa)). 3 residues coordinate [4Fe-4S] cluster: Cys-79, Cys-83, and Cys-86. Residues Cys-123, Cys-155, Cys-215, and Arg-287 each coordinate [2Fe-2S] cluster.

Belongs to the radical SAM superfamily. Biotin synthase family. In terms of assembly, homodimer. [4Fe-4S] cluster serves as cofactor. The cofactor is [2Fe-2S] cluster.

The catalysed reaction is (4R,5S)-dethiobiotin + (sulfur carrier)-SH + 2 reduced [2Fe-2S]-[ferredoxin] + 2 S-adenosyl-L-methionine = (sulfur carrier)-H + biotin + 2 5'-deoxyadenosine + 2 L-methionine + 2 oxidized [2Fe-2S]-[ferredoxin]. It functions in the pathway cofactor biosynthesis; biotin biosynthesis; biotin from 7,8-diaminononanoate: step 2/2. Catalyzes the conversion of dethiobiotin (DTB) to biotin by the insertion of a sulfur atom into dethiobiotin via a radical-based mechanism. This is Biotin synthase from Sorangium cellulosum (strain So ce56) (Polyangium cellulosum (strain So ce56)).